The primary structure comprises 134 residues: MDTYMNRLDLDKLKHENIFSGNIIEDAKEFVFGSRKIYTDSVNDLIELYNLAKYLNNEKLKDVVIERMDYVCKYIIGKDNWYTIYSFYKENGLRNSFLRQYINNNIEEIRNTDQFLKFDVDSVCDILNNDETIV.

The BACK domain maps to 88-133 (YKENGLRNSFLRQYINNNIEEIRNTDQFLKFDVDSVCDILNNDETI).

The protein belongs to the orthopoxvirus OPG030 family.

This chain is Protein OPG030 (OPG30), found in Variola virus (isolate Human/India/Ind3/1967) (VARV).